The following is a 117-amino-acid chain: Antitoxin RelB3 (117 aa).

Its function is as follows. Antitoxin component of a type II toxin-antitoxin (TA) system. Neutralizes the effect of cognate toxin RelE3, but no other RelE or ParE toxin. The sequence is that of Antitoxin RelB3 (relB3) from Caulobacter vibrioides (strain ATCC 19089 / CIP 103742 / CB 15) (Caulobacter crescentus).